The following is a 348-amino-acid chain: GMP reductase (348 aa).

108–131 provides a ligand contact to NADP(+); that stretch reads ADFQKTKDVMALSDELIFICIDIA. Residues G181 and G183 each contribute to the K(+) site. C186 (thioimidate intermediate) is an active-site residue. 216 to 239 serves as a coordination point for NADP(+); sequence IIGDGGCACAGDVAKAFGGGADFV.

It belongs to the IMPDH/GMPR family. GuaC type 1 subfamily. Homotetramer.

The catalysed reaction is IMP + NH4(+) + NADP(+) = GMP + NADPH + 2 H(+). In terms of biological role, catalyzes the irreversible NADPH-dependent deamination of GMP to IMP. It functions in the conversion of nucleobase, nucleoside and nucleotide derivatives of G to A nucleotides, and in maintaining the intracellular balance of A and G nucleotides. This Vibrio vulnificus (strain CMCP6) protein is GMP reductase.